A 219-amino-acid chain; its full sequence is Transmembrane protein 179B (219 aa).

The next 4 membrane-spanning stretches (helical) occupy residues 9–29, 65–85, 98–118, and 162–182; these read VELL…ATLT, FVAG…FFWV, IGLR…LVSA, and LHTA…ALLL. At serine 206 the chain carries Phosphoserine.

Belongs to the TMEM179 family.

The protein resides in the membrane. This is Transmembrane protein 179B (Tmem179b) from Mus musculus (Mouse).